We begin with the raw amino-acid sequence, 423 residues long: Glycine amidinotransferase, mitochondrial (423 aa).

The N-terminal 43 residues, 1 to 43 (MLRVRCLRGGSRGAEAVHYIGSRLGGSLTGWVQRTFQSTQAAT), are a transit peptide targeting the mitochondrion. 2 positions are modified to phosphoserine: Ser-46 and Ser-49. Asp-170 lines the arginine pocket. Catalysis depends on residues Asp-254 and His-303. Residues Asp-305, Arg-322, Ser-354, and Ser-355 each coordinate arginine. Lys-385 carries the N6-acetyllysine modification. Cys-407 (amidino-cysteine intermediate) is an active-site residue.

Belongs to the amidinotransferase family. Homodimer. In terms of tissue distribution, expressed in kidney, brain, gonads, uterus, and embryonic head, chest and abdomen. Maternally expressed in the placenta and yolk sac of embryos.

It localises to the mitochondrion inner membrane. The enzyme catalyses L-arginine + glycine = guanidinoacetate + L-ornithine. It catalyses the reaction 4-aminobutanoate + L-arginine = 4-guanidinobutanoate + L-ornithine. It carries out the reaction beta-alanine + L-arginine = 3-guanidinopropanoate + L-ornithine. The catalysed reaction is taurine + L-arginine = taurocyamine + L-ornithine. The protein operates within amine and polyamine biosynthesis; creatine biosynthesis; creatine from L-arginine and glycine: step 1/2. Transamidinase that catalyzes the transfer of the amidino group of L-arginine onto the amino moiety of acceptor metabolites such as glycine, beta-alanine, gamma-aminobutyric acid (GABA) and taurine yielding the corresponding guanidine derivatives. Catalyzes the rate-limiting step of creatine biosynthesis, namely the transfer of the amidino group from L-arginine to glycine to generate guanidinoacetate, which is then methylated by GAMT to form creatine. Provides creatine as a source for ATP generation in tissues with high energy demands, in particular skeletal muscle, heart and brain. This is Glycine amidinotransferase, mitochondrial (Gatm) from Mus musculus (Mouse).